A 352-amino-acid chain; its full sequence is Phosphoribosylformylglycinamidine cyclo-ligase (352 aa).

The protein belongs to the AIR synthase family.

Its subcellular location is the cytoplasm. It carries out the reaction 2-formamido-N(1)-(5-O-phospho-beta-D-ribosyl)acetamidine + ATP = 5-amino-1-(5-phospho-beta-D-ribosyl)imidazole + ADP + phosphate + H(+). It functions in the pathway purine metabolism; IMP biosynthesis via de novo pathway; 5-amino-1-(5-phospho-D-ribosyl)imidazole from N(2)-formyl-N(1)-(5-phospho-D-ribosyl)glycinamide: step 2/2. In Pseudomonas entomophila (strain L48), this protein is Phosphoribosylformylglycinamidine cyclo-ligase.